The chain runs to 178 residues: Nicotinamide-nucleotide adenylyltransferase (178 aa).

The protein belongs to the archaeal NMN adenylyltransferase family.

It is found in the cytoplasm. It catalyses the reaction beta-nicotinamide D-ribonucleotide + ATP + H(+) = diphosphate + NAD(+). It functions in the pathway cofactor biosynthesis; NAD(+) biosynthesis; NAD(+) from nicotinamide D-ribonucleotide: step 1/1. The protein is Nicotinamide-nucleotide adenylyltransferase of Pyrobaculum arsenaticum (strain DSM 13514 / JCM 11321 / PZ6).